The sequence spans 904 residues: Shieldin complex subunit 2 (904 aa).

The interval 1–60 (MSGGSQVHIFWGAPVAPLKMTVSQDTASLMSVADPWKKIHLLYSQHSLYLKDEKQHKNLE) is sufficient for interaction with SHLD3 and MAD2L2. Positions 1–568 (MSGGSQVHIF…AYVSSKHSYL (568 aa)) are interaction with ASTE1. The tract at residues 721–891 (KCSGVVLIQA…LQQDFSLLDF (171 aa)) is mediates interaction with SHLD1.

It belongs to the SHLD2 family. Component of the shieldin complex, consisting of SHLD1, SHLD2, SHLD3 and MAD2L2/REV7. Within the complex, SHLD2 forms a scaffold which interacts with a SHLD3-MAD2L2 subcomplex via its N-terminus, and with SHLD1 via its C-terminus. Interacts with TP53BP1. Interacts with RIF1. Interacts with ASTE1.

The protein resides in the chromosome. Its function is as follows. Component of the shieldin complex, which plays an important role in repair of DNA double-stranded breaks (DSBs). During G1 and S phase of the cell cycle, the complex functions downstream of TP53BP1 to promote non-homologous end joining (NHEJ) and suppress DNA end resection. Mediates various NHEJ-dependent processes including immunoglobulin class-switch recombination, and fusion of unprotected telomeres. This Pongo abelii (Sumatran orangutan) protein is Shieldin complex subunit 2.